The sequence spans 238 residues: Ribosomal RNA small subunit methyltransferase G (238 aa).

Residues Gly77, Phe82, 128–129 (AE), and Arg147 contribute to the S-adenosyl-L-methionine site.

It belongs to the methyltransferase superfamily. RNA methyltransferase RsmG family.

The protein localises to the cytoplasm. Specifically methylates the N7 position of guanine in position 535 of 16S rRNA. The chain is Ribosomal RNA small subunit methyltransferase G from Lysinibacillus sphaericus (strain C3-41).